The sequence spans 514 residues: Histidine ammonia-lyase (514 aa).

Positions 147–149 (ASG) form a cross-link, 5-imidazolinone (Ala-Gly). The residue at position 148 (S148) is a 2,3-didehydroalanine (Ser).

The protein belongs to the PAL/histidase family. Contains an active site 4-methylidene-imidazol-5-one (MIO), which is formed autocatalytically by cyclization and dehydration of residues Ala-Ser-Gly.

It localises to the cytoplasm. It carries out the reaction L-histidine = trans-urocanate + NH4(+). Its pathway is amino-acid degradation; L-histidine degradation into L-glutamate; N-formimidoyl-L-glutamate from L-histidine: step 1/3. This chain is Histidine ammonia-lyase, found in Gloeobacter violaceus (strain ATCC 29082 / PCC 7421).